A 374-amino-acid polypeptide reads, in one-letter code: Ribosomal RNA large subunit methyltransferase G (374 aa).

Belongs to the methyltransferase superfamily. RlmG family.

It is found in the cytoplasm. The enzyme catalyses guanosine(1835) in 23S rRNA + S-adenosyl-L-methionine = N(2)-methylguanosine(1835) in 23S rRNA + S-adenosyl-L-homocysteine + H(+). Its function is as follows. Specifically methylates the guanine in position 1835 (m2G1835) of 23S rRNA. This chain is Ribosomal RNA large subunit methyltransferase G, found in Pseudomonas putida (strain GB-1).